We begin with the raw amino-acid sequence, 82 residues long: Small ribosomal subunit protein bS16 (82 aa).

Belongs to the bacterial ribosomal protein bS16 family.

This is Small ribosomal subunit protein bS16 from Klebsiella pneumoniae subsp. pneumoniae (strain ATCC 700721 / MGH 78578).